A 578-amino-acid chain; its full sequence is Membrane protein insertase YidC (578 aa).

The chain crosses the membrane as a helical span at residues 3-23 (IQRSILIVALAVVSYLLVLQW). A disordered region spans residues 34-71 (AASASMNTTQGLPDTPSAAGTSSDVPTAQSGAAGSEAA). The span at 37-65 (ASMNTTQGLPDTPSAAGTSSDVPTAQSGA) shows a compositional bias: polar residues. 5 consecutive transmembrane segments (helical) span residues 361-381 (LELT…FWLL), 387-407 (LIGN…LAFF), 457-477 (LGGC…YWVL), 500-520 (PFFI…MLNP), and 535-555 (PIIF…YWVV).

Belongs to the OXA1/ALB3/YidC family. Type 1 subfamily. As to quaternary structure, interacts with the Sec translocase complex via SecD. Specifically interacts with transmembrane segments of nascent integral membrane proteins during membrane integration.

Its subcellular location is the cell inner membrane. Functionally, required for the insertion and/or proper folding and/or complex formation of integral membrane proteins into the membrane. Involved in integration of membrane proteins that insert both dependently and independently of the Sec translocase complex, as well as at least some lipoproteins. Aids folding of multispanning membrane proteins. The polypeptide is Membrane protein insertase YidC (Pseudomonas paraeruginosa (strain DSM 24068 / PA7) (Pseudomonas aeruginosa (strain PA7))).